The primary structure comprises 752 residues: MPLAQLAEPWPNMELVQLDTENGQAAPEEGGNPPCKAKSDITWVEKDLVDSTDKGEGVVKEINITHHVKEGSEKADPSQFELLKVLGQGSFGKVFLVRKITPPDSNHLYAMKVLKKATLKVRDRVRTKIERDILADVNHPFVVKLHYAFQTEGKLYLILDFLRGGDLFTRLSKEVMFTEEDVKFYLAELALGLDHLHSLGIIYRDLKPENILLDEEGHIKLTDFGLSKEAIDHEKKAYSFCGTVEYMAPEVVNRQGHSHSADWWSYGVLMFEMLTGSLPFQGKDRKETMTLILKAKLGMPQFLSAEAQSLLRALFKRNPANRLGSGPDGAEEIKRHPFYSTIDWNKLYRREIKPPFKPAVGQPDDTFYFDTEFTSRTPKDSPGIPPSAGAHQLFRGFSFVATGLMEDSKVKPAQPPLHSVVQQLHGKNIQFSDGYVVKEAIGVGSYSVCKRCIHKTTNMEYAVKVIDKSKRDPSEEIEILLRYGQHPNIITLKDVYDDGKYVYLVTELMRGGELLDKILRQKFFSEREASSVLHTICKTVEYLHSQGVVHRDLKPSNILYVDESGNPESIRICDFGFAKQLRAENGLLMTPCYTANFVAPEVLKRQGYDEGCDIWSLGVLLYTMLAGCTPFANGPSDTPEEILTRIGGGKFSVNGGNWDTISDVAKDLVSKMLHVDPHQRLTAKQVLQHPWITQKDSLPQSQLNYQDVQLVKGAMAATYSALNSSKPSPQLKPIESSILAQRRVKKLPSTTL.

Residues F80–Y339 form the Protein kinase 1 domain. ATP-binding positions include L86 to V94 and K112. D205 serves as the catalytic Proton acceptor. S239 is subject to Phosphoserine. Residues S340 to K409 enclose the AGC-kinase C-terminal domain. T377 is subject to Phosphothreonine. A Phosphoserine modification is found at S381. S398 is subject to Phosphoserine; by autocatalysis. One can recognise a Protein kinase 2 domain in the interval Y435–I692. Residues I441 to C449 and K464 contribute to the ATP site. Residue D552 is the Proton acceptor of the active site. At T590 the chain carries Phosphothreonine. Phosphoserine is present on S749.

The protein belongs to the protein kinase superfamily. AGC Ser/Thr protein kinase family. S6 kinase subfamily. Mg(2+) serves as cofactor. Post-translationally, autophosphorylated on Ser-398, as part of the activation process. As to expression, small and large intestine, spleen, stomach, and bursa, and to a lesser extent lung and kidney.

The enzyme catalyses L-seryl-[protein] + ATP = O-phospho-L-seryl-[protein] + ADP + H(+). The catalysed reaction is L-threonyl-[protein] + ATP = O-phospho-L-threonyl-[protein] + ADP + H(+). Activated by multiple phosphorylations on threonine and serine residues. Its function is as follows. Serine/threonine kinase that may play a role in mediating the growth-factor and stress induced activation of transcription. The sequence is that of Ribosomal protein S6 kinase 2 alpha (RPS6KA) from Gallus gallus (Chicken).